A 704-amino-acid chain; its full sequence is Elongation factor G 1 (704 aa).

The tr-type G domain maps to 8 to 285; the sequence is EKIRNIGISA…AVCAFLPNPK (278 aa). GTP is bound by residues 17–24, 84–88, and 138–141; these read AHIDSGKT, DTPGH, and NKMD.

This sequence belongs to the TRAFAC class translation factor GTPase superfamily. Classic translation factor GTPase family. EF-G/EF-2 subfamily.

The protein resides in the cytoplasm. In terms of biological role, catalyzes the GTP-dependent ribosomal translocation step during translation elongation. During this step, the ribosome changes from the pre-translocational (PRE) to the post-translocational (POST) state as the newly formed A-site-bound peptidyl-tRNA and P-site-bound deacylated tRNA move to the P and E sites, respectively. Catalyzes the coordinated movement of the two tRNA molecules, the mRNA and conformational changes in the ribosome. The chain is Elongation factor G 1 from Myxococcus xanthus (strain DK1622).